A 235-amino-acid polypeptide reads, in one-letter code: Isoprenyl transferase (235 aa).

Aspartate 21 is a catalytic residue. Residue aspartate 21 participates in Mg(2+) binding. Residues 22-25 (GNAR), tryptophan 26, lysine 34, histidine 38, and 66-68 (SSE) each bind substrate. The active-site Proton acceptor is asparagine 69. Substrate-binding positions include tryptophan 70, arginine 72, arginine 183, and 189–191 (RIS). Residue glutamate 202 coordinates Mg(2+).

It belongs to the UPP synthase family. In terms of assembly, homodimer. It depends on Mg(2+) as a cofactor.

Its function is as follows. Catalyzes the condensation of isopentenyl diphosphate (IPP) with allylic pyrophosphates generating different type of terpenoids. This Rickettsia conorii (strain ATCC VR-613 / Malish 7) protein is Isoprenyl transferase.